A 1019-amino-acid chain; its full sequence is Pleckstrin homology domain-containing family M member 2 (1019 aa).

Met-1 carries the N-acetylmethionine modification. Residues 1-310 (MEPGEVKDRI…LDPPDACTEL (310 aa)) are interaction with KIF5B. One can recognise an RUN domain in the interval 36–158 (RNHDKVLQRL…IRFELDLDAP (123 aa)). Disordered stretches follow at residues 230–458 (SVPS…SEGL), 471–525 (SPST…REAQ), and 557–581 (QPSP…SEMV). Polar residues-rich tracts occupy residues 243–272 (DTVS…QNPF) and 279–291 (TVSS…VHTT). A compositionally biased stretch (basic residues) spans 315-327 (VTKKKKIGKKKKS). Residues 417 to 427 (LNGQLDPSTWC) are compositionally biased toward polar residues. Ser-441 is modified (phosphoserine). Basic and acidic residues predominate over residues 516 to 525 (PLEDTTREAQ). The interval 762-885 (PCHCSPPEGT…VIPQGVAPSP (124 aa)) is interaction with sifA. Residues 771–873 (TITKEGMLHY…WMQHLCQAVS (103 aa)) form the PH domain.

In terms of assembly, interacts with KLC2 (via TPR repeats). Interacts with KIF5B. Interacts with BORCS5. Interacts (via RUN domain) with ARL8B (GTP-bound form); PLEKHM1 and PLEKHM2 compete for interaction with ARL8B. Interacts with ARL8A. As to quaternary structure, (Microbial infection) Interacts with the S.typhimurium sifA protein; required for S.typhimurium infection.

The protein resides in the cytoplasm. It localises to the lysosome membrane. Plays a role in lysosomes movement and localization at the cell periphery acting as an effector of ARL8B. Required for ARL8B to exert its effects on lysosome location, recruits kinesin-1 to lysosomes and hence direct their movement toward microtubule plus ends. Binding to ARL8B provides a link from lysosomal membranes to plus-end-directed motility. Critical factor involved in NK cell-mediated cytotoxicity. Drives the polarization of cytolytic granules and microtubule-organizing centers (MTOCs) toward the immune synapse between effector NK lymphocytes and target cells. Required for maintenance of the Golgi apparatus organization. May play a role in membrane tubulation. The sequence is that of Pleckstrin homology domain-containing family M member 2 from Homo sapiens (Human).